A 1040-amino-acid polypeptide reads, in one-letter code: DNA cross-link repair 1A protein (1040 aa).

The nuclear localization region stretch occupies residues 1–190 (MLEDISEEDI…RAGDHPFSSP (190 aa)). Positions 15–76 (SKRKPKRVDP…LGNAGCQTSV (62 aa)) are disordered. Positions 53-65 (RAAEAKEVKDHEV) are enriched in basic and acidic residues. The segment at 119–149 (DGYCPNCQMPFSSLIGQTPRWHVFECLDSPP) adopts a UBZ4-type zinc-finger fold. Zn(2+) is bound by residues cysteine 122, cysteine 125, histidine 140, and cysteine 144. Residues lysine 202, lysine 236, lysine 269, lysine 353, lysine 361, lysine 429, lysine 488, lysine 508, lysine 517, lysine 533, and lysine 536 each participate in a glycyl lysine isopeptide (Lys-Gly) (interchain with G-Cter in SUMO2) cross-link. Positions 396 to 614 (LPYDLACTGG…KSLSDLEFDA (219 aa)) are nuclear focus formation. Disordered regions lie at residues 582-602 (GINLNPVPSPNQKRSSQCKRK) and 623-651 (SVELSSERSQRQKKRCRKSNSLQEGACQK). At serine 590 the chain carries Phosphoserine. Residues lysine 668, lysine 670, and lysine 674 each participate in a glycyl lysine isopeptide (Lys-Gly) (interchain with G-Cter in SUMO2) cross-link.

Belongs to the DNA repair metallo-beta-lactamase (DRMBL) family. As to quaternary structure, binds constitutively to TP53BP1. Binds CDC27, which is itself a component of the anaphase promoting complex (APC). Binds PIAS1. Expressed in brain, heart, kidney, liver, pancreas, placenta and skeletal muscle.

The protein resides in the nucleus. The catalysed reaction is a beta-lactam + H2O = a substituted beta-amino acid. With respect to regulation, beta-lactamase activity is inhibited by sulbactam. Its function is as follows. May be required for DNA interstrand cross-link repair. Also required for checkpoint mediated cell cycle arrest in early prophase in response to mitotic spindle poisons. Possesses beta-lactamase activity, catalyzing the hydrolysis of penicillin G and nitrocefin. Exhibits no activity towards other beta-lactam antibiotic classes including cephalosporins (cefotaxime) and carbapenems (imipenem). This Homo sapiens (Human) protein is DNA cross-link repair 1A protein (DCLRE1A).